The sequence spans 715 residues: Fatty acid oxidation complex subunit alpha (715 aa).

An enoyl-CoA hydratase region spans residues 1 to 194; sequence MHEQRAKPSA…RLGLVDDAVP (194 aa). The interval 310–715 is 3-hydroxyacyl-CoA dehydrogenase; that stretch reads HALHRIGILG…QGERFYPQGS (406 aa).

It in the N-terminal section; belongs to the enoyl-CoA hydratase/isomerase family. The protein in the central section; belongs to the 3-hydroxyacyl-CoA dehydrogenase family. In terms of assembly, heterotetramer of two alpha chains (FadJ) and two beta chains (FadI).

The protein resides in the cytoplasm. The catalysed reaction is a (3S)-3-hydroxyacyl-CoA = a (2E)-enoyl-CoA + H2O. It catalyses the reaction a 4-saturated-(3S)-3-hydroxyacyl-CoA = a (3E)-enoyl-CoA + H2O. It carries out the reaction a (3S)-3-hydroxyacyl-CoA + NAD(+) = a 3-oxoacyl-CoA + NADH + H(+). The enzyme catalyses (3S)-3-hydroxybutanoyl-CoA = (3R)-3-hydroxybutanoyl-CoA. It functions in the pathway lipid metabolism; fatty acid beta-oxidation. Functionally, catalyzes the formation of a hydroxyacyl-CoA by addition of water on enoyl-CoA. Also exhibits 3-hydroxyacyl-CoA epimerase and 3-hydroxyacyl-CoA dehydrogenase activities. The polypeptide is Fatty acid oxidation complex subunit alpha (Serratia proteamaculans (strain 568)).